Consider the following 139-residue polypeptide: uncharacterized protein (139 aa).

The protein to S.typhimurium FliF.

May be involved in the assembly, structure, or function of the flagellum. May polymerize to form a filamentous structure that is part of the flagellum. This is an uncharacterized protein from Bacillus subtilis (strain 168).